A 712-amino-acid polypeptide reads, in one-letter code: Polyribonucleotide nucleotidyltransferase (712 aa).

Mg(2+)-binding residues include Asp485 and Asp491. Residues Pro552–Thr615 enclose the KH domain. The S1 motif domain occupies Asn621–Lys689.

This sequence belongs to the polyribonucleotide nucleotidyltransferase family. Component of the RNA degradosome, which is a multiprotein complex involved in RNA processing and mRNA degradation. Requires Mg(2+) as cofactor.

The protein localises to the cytoplasm. It carries out the reaction RNA(n+1) + phosphate = RNA(n) + a ribonucleoside 5'-diphosphate. Involved in mRNA degradation. Catalyzes the phosphorolysis of single-stranded polyribonucleotides processively in the 3'- to 5'-direction. The sequence is that of Polyribonucleotide nucleotidyltransferase from Aeromonas hydrophila subsp. hydrophila (strain ATCC 7966 / DSM 30187 / BCRC 13018 / CCUG 14551 / JCM 1027 / KCTC 2358 / NCIMB 9240 / NCTC 8049).